A 371-amino-acid polypeptide reads, in one-letter code: Queuine tRNA-ribosyltransferase (371 aa).

D89 acts as the Proton acceptor in catalysis. Substrate-binding positions include 89 to 93 (DSGGF), D143, Q185, and G212. The interval 243–249 (GVGKPED) is RNA binding. Catalysis depends on D262, which acts as the Nucleophile. An RNA binding; important for wobble base 34 recognition region spans residues 267 to 271 (TRNAR). Residues C300, C302, C305, and H331 each coordinate Zn(2+).

The protein belongs to the queuine tRNA-ribosyltransferase family. In terms of assembly, homodimer. Within each dimer, one monomer is responsible for RNA recognition and catalysis, while the other monomer binds to the replacement base PreQ1. Requires Zn(2+) as cofactor.

It carries out the reaction 7-aminomethyl-7-carbaguanine + guanosine(34) in tRNA = 7-aminomethyl-7-carbaguanosine(34) in tRNA + guanine. Its pathway is tRNA modification; tRNA-queuosine biosynthesis. Its function is as follows. Catalyzes the base-exchange of a guanine (G) residue with the queuine precursor 7-aminomethyl-7-deazaguanine (PreQ1) at position 34 (anticodon wobble position) in tRNAs with GU(N) anticodons (tRNA-Asp, -Asn, -His and -Tyr). Catalysis occurs through a double-displacement mechanism. The nucleophile active site attacks the C1' of nucleotide 34 to detach the guanine base from the RNA, forming a covalent enzyme-RNA intermediate. The proton acceptor active site deprotonates the incoming PreQ1, allowing a nucleophilic attack on the C1' of the ribose to form the product. After dissociation, two additional enzymatic reactions on the tRNA convert PreQ1 to queuine (Q), resulting in the hypermodified nucleoside queuosine (7-(((4,5-cis-dihydroxy-2-cyclopenten-1-yl)amino)methyl)-7-deazaguanosine). In Thioalkalivibrio sulfidiphilus (strain HL-EbGR7), this protein is Queuine tRNA-ribosyltransferase.